The sequence spans 46 residues: Protein PsbN (46 aa).

Residues 10–30 (LAIIVLVVLLGLTGLGVYMAF) form a helical membrane-spanning segment.

It belongs to the PsbN family.

It is found in the cellular thylakoid membrane. Functionally, may play a role in photosystem I and II biogenesis. The polypeptide is Protein PsbN (Prochlorococcus marinus (strain MIT 9211)).